We begin with the raw amino-acid sequence, 468 residues long: Glutamate--tRNA ligase (468 aa).

A 'HIGH' region motif is present at residues 12-22 (PSPTGFIHLGN). Positions 244-248 (KMSKR) match the 'KMSKS' region motif. ATP is bound at residue Lys-247.

This sequence belongs to the class-I aminoacyl-tRNA synthetase family. Glutamate--tRNA ligase type 1 subfamily. As to quaternary structure, monomer.

The protein localises to the cytoplasm. The catalysed reaction is tRNA(Glu) + L-glutamate + ATP = L-glutamyl-tRNA(Glu) + AMP + diphosphate. Functionally, catalyzes the attachment of glutamate to tRNA(Glu) in a two-step reaction: glutamate is first activated by ATP to form Glu-AMP and then transferred to the acceptor end of tRNA(Glu). The protein is Glutamate--tRNA ligase of Polynucleobacter necessarius subsp. necessarius (strain STIR1).